A 612-amino-acid polypeptide reads, in one-letter code: MCGIVGAIRAHHNVVDFLTDGLKRLEYRGYDSSGIAVNTDGKIKRVRRVGRVQLMEDAAREKGISGGIGIGHTRWATHGGVTEPNAHPHISGGMIAVVHNGIIENFESERKRLEGLGYRFESQTDTEVIAHSINHEYAQNGGKLFEAVQEAVKRFHGAYAIAVIAQDKPDELVVARMGCPLLVALGDDETFIASDVSAVIAFTRRVAYLEDGDIALLASDGIKRLTDKSGLPAERKVKVSELSLASLELGPYSHFMQKEIHEQPRAIADTAEVFLDGGFIPENFGKNAKSVFESIRSVKILACGTSYYAALTAKYWLESIAKIPSDVEIASEYRYRSVIADPDQLVITISQSGETLDTMEALKYAKSLGHRHSLSICNVMESALPRESSLVLYTRAGAEIGVASTKAFTTQLVALFGLAVTLAKVRGLVSEEDEARYTEELRQLPGSVQHALNLEPQIAAWAQQFAKKTSALFLGRGIHYPIALEGALKLKEITYIHAEAYPAGELKHGPLALVDENMPVVVIAPNDSLLDKVKANMQEVGARGGELFVFADLDSNFNATEGVHVIRAPRHVGELSPVVHTIPVQLLSYHVALARGTDVDKPRNLAKSVTVE.

Cys-2 serves as the catalytic Nucleophile; for GATase activity. A Glutamine amidotransferase type-2 domain is found at 2–220 (CGIVGAIRAH…DGDIALLASD (219 aa)). 2 consecutive SIS domains span residues 288 to 428 (AKSV…VRGL) and 461 to 602 (WAQQ…VDKP). The For Fru-6P isomerization activity role is filled by Lys-607.

As to quaternary structure, homodimer.

It is found in the cytoplasm. The enzyme catalyses D-fructose 6-phosphate + L-glutamine = D-glucosamine 6-phosphate + L-glutamate. In terms of biological role, catalyzes the first step in hexosamine metabolism, converting fructose-6P into glucosamine-6P using glutamine as a nitrogen source. The protein is Glutamine--fructose-6-phosphate aminotransferase [isomerizing] of Neisseria meningitidis serogroup A / serotype 4A (strain DSM 15465 / Z2491).